Consider the following 388-residue polypeptide: Cystathionine gamma-synthase (388 aa).

The tract at residues 1–24 (MSEDRTGHQGISGPATRAIHAGYR) is disordered. At K208 the chain carries N6-(pyridoxal phosphate)lysine.

This sequence belongs to the trans-sulfuration enzymes family. In terms of assembly, homotetramer. The cofactor is pyridoxal 5'-phosphate.

Its subcellular location is the cytoplasm. The catalysed reaction is O-succinyl-L-homoserine + L-cysteine = L,L-cystathionine + succinate + H(+). In terms of biological role, catalyzes the formation of L-cystathionine from O-succinyl-L-homoserine (OSHS) and L-cysteine, via a gamma-replacement reaction. In the absence of thiol, catalyzes gamma-elimination to form 2-oxobutanoate, succinate and ammonia. The sequence is that of Cystathionine gamma-synthase (metB) from Mycobacterium bovis (strain ATCC BAA-935 / AF2122/97).